A 305-amino-acid polypeptide reads, in one-letter code: Regulator of microtubule dynamics protein 1 (305 aa).

K160 is subject to N6-succinyllysine. TPR repeat units lie at residues 163–199 (AICISDVGDYEGIKVKIANAYVIKEHFEKAIELNPKD) and 217–253 (PWYQRRIAKVLFANPPSSTYEEALRYFHKAEEVDPNF). An N6-succinyllysine modification is found at K245.

This sequence belongs to the RMDN family. As to quaternary structure, interacts with microtubules.

It is found in the cytoplasm. Its subcellular location is the cytoskeleton. The protein resides in the spindle. The protein localises to the spindle pole. In Mus musculus (Mouse), this protein is Regulator of microtubule dynamics protein 1 (Rmdn1).